Consider the following 601-residue polypeptide: CDPK-related kinase 5 (601 aa).

Positions 1–19 are enriched in polar residues; it reads MGLCTSKPNSSNSDQTPAR. Disordered stretches follow at residues 1–55 and 70–98; these read MGLC…KSPF and KKTPARSPATNSTNSTPKRFFKRPFPPPS. Glycine 2 is lipidated: N-myristoyl glycine. The span at 26–35 shows a compositional bias: low complexity; that stretch reads SESVKPSSSS. Residues 36–48 are compositionally biased toward polar residues; the sequence is VNGEDQCVTTTNN. One can recognise a Protein kinase domain in the interval 148 to 410; sequence YELGDEVGRG…AAQALSHPWI (263 aa). ATP contacts are provided by residues 154–162 and lysine 180; that span reads VGRGHFGYT. Aspartate 276 acts as the Proton acceptor in catalysis. Serine 316 carries the phosphoserine modification. Residues 415 to 445 are autoinhibitory domain; sequence DAKVPMDILVFKLMRAYLRSSSLRKAALRAL. Residues 434 to 454 form a calmodulin binding (CaMBD) region; the sequence is SSSLRKAALRALSKTLTVDEL. EF-hand domains are found at residues 452 to 488, 489 to 524, 525 to 564, and 567 to 596; these read DELFYLREQFALLEPSKNGTISLENIKSALMKMATDA, MKDSRIPEFLGQLSALQYRRMDFEEFCAAALSVHQL, EALDRWEQHARCAYELFEKEGNRPIMIDELASELGLGPSV, and HAVLHDWLRHTDGKLSFLGFVKLLHGVSSR. 10 residues coordinate Ca(2+): serine 467, asparagine 469, threonine 471, asparagine 476, arginine 508, glutamate 513, asparagine 546, glutamate 553, aspartate 578, and lysine 580. At serine 582 the chain carries Phosphoserine.

It belongs to the protein kinase superfamily. Ser/Thr protein kinase family. CDPK subfamily. Binds calmodulin (CaM) in a calcium-dependent manner.

Its subcellular location is the membrane. The catalysed reaction is L-seryl-[protein] + ATP = O-phospho-L-seryl-[protein] + ADP + H(+). The enzyme catalyses L-threonyl-[protein] + ATP = O-phospho-L-threonyl-[protein] + ADP + H(+). Activated by calcium and calmodulin. Autophosphorylation may play an important role in the regulation of the kinase activity. In terms of biological role, may play a role in signal transduction pathways that involve calcium as a second messenger. The chain is CDPK-related kinase 5 (CRK5) from Arabidopsis thaliana (Mouse-ear cress).